We begin with the raw amino-acid sequence, 596 residues long: MVMAQKLKEAEITEQDSLLLTRNLLRIAIFNISYIRGLFPEKYFNDKSVPALDMKIKKLMPMDAESRRLIDWMEKGVYDALQRKYLKTLMFSICETVDGPMIEEYSFSFSYSDSDSQDVMMNINRTGNKKNGGIFNSTADITPNQMRSSACKMVRTLVQLMRTLDKMPDERTIVMKLLYYDDVTPPDYEPPFFRGCTEDEAQYVWTKNPLRMEIGNVNSKHLVLTLKVKSVLDPCEDENDDMQDDGKSIGPDSVHDDQPSDSDSEISQTQENQFIVAPVEKQDDDDGEVDEDDNTQDPAENEQQLARVKDWINSRHLDTLELTDILANFPDISIVLSEEIMDQLVTEGVLSKTGKDMYIKKRDKTPESEFTFVKEEADGQISPGKSVAPEDYLYMKALYHSLPMKYVTITKLHNMLDGEANQTAVRKLMDRMTQEGYVEASSNRRLGKRVIHSSLTEKKLNEVRKVLATDDMDVDVTETINKTNGPDAKVTADVSTCGGIHSIGSDFTRTKGRSGGMQQNGSVLSEQTISKAGNTPISNKAQPAASRESFAVHGGAVKEAETVNCSQASQDRRGRKTSMVREPILQYSKRQKSQAN.

In terms of domain architecture, HORMA spans 15–228 (QDSLLLTRNL…SKHLVLTLKV (214 aa)). The interval 235-303 (CEDENDDMQD…NTQDPAENEQ (69 aa)) is disordered. The span at 282 to 295 (QDDDDGEVDEDDNT) shows a compositional bias: acidic residues. The SWIRM domain maps to 351 to 449 (SKTGKDMYIK…ASSNRRLGKR (99 aa)). Residues 562-596 (TVNCSQASQDRRGRKTSMVREPILQYSKRQKSQAN) form a disordered region.

In terms of assembly, interacts with ASY3.

The protein localises to the chromosome. It is found in the nucleus. Its function is as follows. Required for normal meiosis in male and female gametophytes. Plays a crucial role in coordinating the activity of DMC1, a key member of the homologous recombination machinery. Acts at the interface between the developing chromosome axes and the recombination machinery to ensure DMC1-mediated interhomolog recombination. In Arabidopsis thaliana (Mouse-ear cress), this protein is Meiosis-specific protein ASY1.